The sequence spans 101 residues: Movement protein (101 aa).

A helical membrane pass occupies residues glutamate 30–leucine 50.

This sequence belongs to the mastrevirus movement protein family. In terms of assembly, interacts with the capsid protein (CP). Part of a MP-CP-viral DNA complex.

Its subcellular location is the host membrane. Functionally, involved in the viral transport within, and between cells. This is Movement protein from Maize streak virus genotype D (isolate Raw) (MSV).